We begin with the raw amino-acid sequence, 1951 residues long: [F-actin]-monooxygenase MICAL2 (1951 aa).

The monooxygenase domain stretch occupies residues Gly-2–Asp-494. Residues Cys-97, Glu-116 to Arg-118, Arg-123 to Asn-125, Phe-183, Tyr-298, and Asp-398 contribute to the FAD site. A Calponin-homology (CH) domain is found at Asp-516–Glu-619. The residue at position 631 (Ser-631) is a Phosphoserine. A Nuclear localization signal motif is present at residues Arg-660–Gln-681. 2 disordered regions span residues Thr-663 to Lys-712 and Lys-891 to Ser-921. The segment covering Ser-691–Ser-700 has biased composition (low complexity). Over residues Ala-896–His-909 the composition is skewed to pro residues. Over residues Pro-910–Ser-921 the composition is skewed to low complexity. The 63-residue stretch at Asp-991–Ser-1053 folds into the LIM zinc-binding domain. Cys-993, Cys-996, His-1014, Cys-1017, Cys-1020, Cys-1023, Cys-1043, and His-1046 together coordinate Zn(2+). Residue Thr-1052 is modified to Phosphoserine. Disordered regions lie at residues Ser-1054–Pro-1141, Thr-1158–Thr-1314, Val-1348–Gln-1368, Ile-1383–Gly-1427, His-1451–Ser-1476, Gln-1489–Ala-1580, Ala-1594–Pro-1624, Gly-1678–Leu-1697, Ser-1706–Gly-1731, and Pro-1747–Ser-1766. Basic and acidic residues predominate over residues Ala-1061 to Glu-1070. 3 stretches are compositionally biased toward polar residues: residues Pro-1129–Arg-1138, His-1228–Gln-1239, and Gln-1246–Ala-1256. Residues Pro-1257–Ser-1268 show a composition bias toward pro residues. The segment covering Leu-1269–Pro-1285 has biased composition (low complexity). Residues Asp-1291–Ile-1306 are compositionally biased toward polar residues. Positions Thr-1314 to Glu-1353 are interaction with MAPK1. Over residues Pro-1350–Glu-1359 the composition is skewed to basic and acidic residues. Over residues Glu-1532–Thr-1545 the composition is skewed to basic and acidic residues. The segment covering Leu-1599–Ser-1616 has biased composition (low complexity). Residues Gly-1678 to Gly-1688 show a composition bias toward basic and acidic residues. Ser-1683 bears the Phosphoserine mark. The segment covering Ser-1706–Gln-1720 has biased composition (polar residues). The segment covering Thr-1749–Ser-1759 has biased composition (low complexity). Residues Lys-1789–Asn-1939 enclose the bMERB domain.

Belongs to the Mical family. As to quaternary structure, interacts with PLXNA4. Interacts with RAB1B. Interacts with MAPK1/ERK2. Interacts with RAB1B, RAB35, RAB8A, RAB10, RAB13 and RAB15 (in their GTP-bound forms); binding to RAB1B and RAB35 is of low affinity compared to other Rab proteins; binding to RAB1B and RAB35 is of low affinity compared to other Rab proteins; at least in case of RAB8A may bind 2 molecules of RAB8A simultaneously through a high and a low affinity binding site, respectively. It depends on FAD as a cofactor. Expressed only in testis (at protein level).

Its subcellular location is the cytoplasm. The protein resides in the nucleus. The enzyme catalyses L-methionyl-[F-actin] + NADPH + O2 + H(+) = L-methionyl-(R)-S-oxide-[F-actin] + NADP(+) + H2O. Functionally, methionine monooxygenase that promotes depolymerization of F-actin by mediating oxidation of residues 'Met-44' and 'Met-47' on actin to form methionine-sulfoxide, resulting in actin filament disassembly and preventing repolymerization. Regulates the disassembly of branched actin networks also by oxidizing ARP3B-containing ARP2/3 complexes leading to ARP3B dissociation from the network. Acts as a key regulator of the SRF signaling pathway elicited by nerve growth factor and serum: mediates oxidation and subsequent depolymerization of nuclear actin, leading to increase MKL1/MRTF-A presence in the nucleus and promote SRF:MKL1/MRTF-A-dependent gene transcription. Does not activate SRF:MKL1/MRTF-A through RhoA. The polypeptide is [F-actin]-monooxygenase MICAL2 (Mus musculus (Mouse)).